Reading from the N-terminus, the 184-residue chain is Thymidine kinase (184 aa).

Residues 10 to 17 and 83 to 86 each bind ATP; these read GPMYSGKT and DEVQ. The Proton acceptor role is filled by E84. Zn(2+) contacts are provided by C140, C143, C173, and C176.

This sequence belongs to the thymidine kinase family. In terms of assembly, homotetramer.

It is found in the cytoplasm. It carries out the reaction thymidine + ATP = dTMP + ADP + H(+). In Thermotoga sp. (strain RQ2), this protein is Thymidine kinase.